The chain runs to 119 residues: Beta-2-microglobulin (119 aa).

Residues 1 to 20 (MARFVVVPLLVLLSLFGLEA) form the signal peptide. The Ig-like C1-type domain occupies 25–114 (PKIQVYSRYP…VTFSTPKTVK (90 aa)). A disulfide bridge links Cys45 with Cys100.

It belongs to the beta-2-microglobulin family. Heterodimer of an alpha chain and a beta chain. Beta-2-microglobulin is the beta-chain of major histocompatibility complex class I molecules.

It is found in the secreted. Its function is as follows. Component of the class I major histocompatibility complex (MHC). Involved in the presentation of peptide antigens to the immune system. The protein is Beta-2-microglobulin (B2M) of Saguinus bicolor bicolor (Pied bare-faced tamarin).